The sequence spans 662 residues: DNA ligase (662 aa).

NAD(+) contacts are provided by residues 31–35, 80–81, and E109; these read DYEYD and SL. The N6-AMP-lysine intermediate role is filled by K111. Positions 132, 166, 282, and 306 each coordinate NAD(+). Residues C400, C403, C418, and C423 each coordinate Zn(2+). The BRCT domain occupies 581-662; it reads KVSNIFEGKT…FEEMLKGENI (82 aa).

The protein belongs to the NAD-dependent DNA ligase family. LigA subfamily. Mg(2+) is required as a cofactor. It depends on Mn(2+) as a cofactor.

The catalysed reaction is NAD(+) + (deoxyribonucleotide)n-3'-hydroxyl + 5'-phospho-(deoxyribonucleotide)m = (deoxyribonucleotide)n+m + AMP + beta-nicotinamide D-nucleotide.. Functionally, DNA ligase that catalyzes the formation of phosphodiester linkages between 5'-phosphoryl and 3'-hydroxyl groups in double-stranded DNA using NAD as a coenzyme and as the energy source for the reaction. It is essential for DNA replication and repair of damaged DNA. This chain is DNA ligase, found in Thermoanaerobacter sp. (strain X514).